Reading from the N-terminus, the 739-residue chain is Nucleoprotein (739 aa).

Residues 334-363 (VNVGEQYQQLREAATEAEKQLQQYAESREL) adopt a coiled-coil conformation. 2 disordered regions span residues 414 to 475 (RPNL…YHDD) and 493 to 641 (DDNK…DIGQ). Polar residues predominate over residues 531–546 (SDNNQQSADSEEQGGQ). The span at 570–579 (TLMDQGDDDP) shows a compositional bias: acidic residues. The segment covering 614–624 (AEAHEPPHKSS) has biased composition (basic and acidic residues). Residues 625 to 634 (NEPAETSQLN) show a composition bias toward polar residues.

It belongs to the filoviruses nucleoprotein family. As to quaternary structure, homooligomer. Homomultimerizes to form the nucleocapsid. Binds to viral genomic RNA. Interacts with VP35 and VP30 to form the nucleocapsid. Interacts with host PPP2R5C; this interaction leads to VP30 dephosphorylation and viral transcription. Interacts with VP24; this interaction facilitates nucleocapsid assembly and genome packaging. Interacts with matrix protein VP40; this interaction allows recruitment of the nucleocapsid into progeny virions. Interacts with host STAU1. Interacts with host NXF1 (via RNA-binding domain); this interaction recruits NXF1 to the inclusion bodies were viral replication takes place, probably to export viral mRNA-NXF1 complexes from these sites. Interacts with host CCDC92; this interaction sequesters NP in the host cytoplasm. Interacts with host TRIM14. Phosphorylated and O-glycosylated by host. Acetylated by host EP300 in vitro.

The protein localises to the virion. It localises to the host cytoplasm. Its function is as follows. Oligomerizes into helical capsid to encapsidate the viral genome, protecting it from nucleases and the cellular innate immune response. VP35 binds to and stabilizes monomeric NP, keeping it soluble. Upon virus replication, NP is recruited to bind cooperatively viral genomic RNA and VP35 is released. The encapsidated genomic RNA is termed the nucleocapsid and serves as template for transcription and replication. The nucleocapsid is helical with a pitch of 10.81 NP per turn and a diameter of about 22nm. Each NP binds to six nucleotides of viral genomic RNA, three being exposed to the solvant and three hidden into the nucleocapsid. Also recruits host PPP2R5C phosphatase to dephosphorylate VP30 and thereby promote viral transcription. Upon virion assembly and budding, NP binds to VP24 and possibly host STAU1. The chain is Nucleoprotein (NP) from Reston ebolavirus (strain Reston-89) (REBOV).